The primary structure comprises 768 residues: Photosystem I P700 chlorophyll a apoprotein A1 (768 aa).

8 consecutive transmembrane segments (helical) span residues 76–99 (VFSA…FHGA), 162–185 (LMAL…YHYH), 201–225 (LNHH…HIGA), 310–328 (ISHH…GHLY), 369–392 (WHAQ…HHMY), 408–434 (LGLF…IAMI), 456–478 (ALIS…LYIH), and 559–577 (FMIH…LILL). C601 and C610 together coordinate [4Fe-4S] cluster. Transmembrane regions (helical) follow at residues 617-638 (HVFL…HFSW) and 682-704 (ISMY…MFLF). Residue H693 coordinates divinylchlorophyll a'. Residues M701 and Y709 each coordinate divinyl chlorophyll a. W710 contributes to the phylloquinone binding site. The helical transmembrane segment at 742-762 (AVGAAHFLLGGIATTWAFFHA) threads the bilayer.

It belongs to the PsaA/PsaB family. The PsaA/B heterodimer binds the P700 divinyl chlorophyll special pair and subsequent electron acceptors. PSI consists of a core antenna complex that captures photons, and an electron transfer chain that converts photonic excitation into a charge separation. The cyanobacterial PSI reaction center is composed of one copy each of PsaA,B,C,D,E,F,I,J,K,L,M and X, and forms trimeric complexes. PSI electron transfer chain: 5 divinyl chlorophyll a, 1 divinyl chlorophyll a', 2 phylloquinones and 3 4Fe-4S clusters. PSI core antenna: 90 divinyl chlorophyll a, 22 carotenoids, 3 phospholipids and 1 galactolipid. P700 is a divinyl chlorophyll a/divinyl chlorophyll a' dimer, A0 is one or more divinyl chlorophyll a, A1 is one or both phylloquinones and FX is a shared 4Fe-4S iron-sulfur center. serves as cofactor.

Its subcellular location is the cellular thylakoid membrane. The catalysed reaction is reduced [plastocyanin] + hnu + oxidized [2Fe-2S]-[ferredoxin] = oxidized [plastocyanin] + reduced [2Fe-2S]-[ferredoxin]. In terms of biological role, psaA and PsaB bind P700, the primary electron donor of photosystem I (PSI), as well as the electron acceptors A0, A1 and FX. PSI is a plastocyanin/cytochrome c6-ferredoxin oxidoreductase, converting photonic excitation into a charge separation, which transfers an electron from the donor P700 chlorophyll pair to the spectroscopically characterized acceptors A0, A1, FX, FA and FB in turn. Oxidized P700 is reduced on the lumenal side of the thylakoid membrane by plastocyanin or cytochrome c6. This is Photosystem I P700 chlorophyll a apoprotein A1 from Prochlorococcus marinus (strain NATL1A).